Here is a 332-residue protein sequence, read N- to C-terminus: Homeobox protein DLX-2 (332 aa).

Over residues 19-28 (ASSTYHQHQQ) the composition is skewed to polar residues. The segment at 19-83 (ASSTYHQHQQ…QHPAGGGGGG (65 aa)) is disordered. Low complexity predominate over residues 40–49 (NSNSSSSNSS). Residues 55-75 (ESPTLPVSTATDSSYYTNQQH) are compositionally biased toward polar residues. A DNA-binding region (homeobox) is located at residues 155 to 214 (VRKPRTIYSSFQLAALQRRFQKTQYLALPERAELAASLGLTQTQVKIWFQNRRSKFKKMW). Disordered stretches follow at residues 219–272 (IPTE…SSPS) and 304–332 (PSQT…GTIF). Ser235 carries the phosphoserine modification. Residues 253–266 (AGGGPGSGGGGAGS) are compositionally biased toward gly residues. Over residues 310-320 (AHHHHHHHHHA) the composition is skewed to basic residues.

The protein belongs to the distal-less homeobox family. As to quaternary structure, interacts (via homeobox DNA-binding domain) with POU4F2; this interaction enhances retinal ganglion cell (RGC) differentiation. Post-translationally, phosphorylated by serine/threonine kinases. As to expression, expressed only in neural and other ectodermal structures of the head: the brain, the vomeronasal organ, and the preameloblasts of the teeth. Primarily expressed in the germinal cells of the ventral forebrain in the midgestational embryo, and in both dorsal and ventral ventricular zones in late embryogenesis and early postnatal life. Expressed in the inner nuclear layer of the retina.

The protein localises to the nucleus. Its function is as follows. Acts as a transcriptional activator. Activates transcription of CGA/alpha-GSU, via binding to the downstream activin regulatory element (DARE) in the gene promoter. Plays a role in terminal differentiation of interneurons, such as amacrine and bipolar cells in the developing retina. Likely to play a regulatory role in the development of the ventral forebrain. May play a role in craniofacial patterning and morphogenesis. This is Homeobox protein DLX-2 (Dlx2) from Mus musculus (Mouse).